A 112-amino-acid polypeptide reads, in one-letter code: Large ribosomal subunit protein bL17 (112 aa).

Belongs to the bacterial ribosomal protein bL17 family. As to quaternary structure, part of the 50S ribosomal subunit. Contacts protein L32.

The chain is Large ribosomal subunit protein bL17 from Desulforudis audaxviator (strain MP104C).